Reading from the N-terminus, the 638-residue chain is Threonine--tRNA ligase (638 aa).

The TGS domain occupies 1-61 (MPVITLPDGS…DADAQLQIIT (61 aa)). Residues 243-534 (DHRKIGKALN…LTEEFAGFFP (292 aa)) are catalytic. Zn(2+)-binding residues include Cys-334, His-385, and His-511.

The protein belongs to the class-II aminoacyl-tRNA synthetase family. In terms of assembly, homodimer. Zn(2+) serves as cofactor.

The protein resides in the cytoplasm. The catalysed reaction is tRNA(Thr) + L-threonine + ATP = L-threonyl-tRNA(Thr) + AMP + diphosphate + H(+). Functionally, catalyzes the attachment of threonine to tRNA(Thr) in a two-step reaction: L-threonine is first activated by ATP to form Thr-AMP and then transferred to the acceptor end of tRNA(Thr). Also edits incorrectly charged L-seryl-tRNA(Thr). The chain is Threonine--tRNA ligase from Alteromonas mediterranea (strain DSM 17117 / CIP 110805 / LMG 28347 / Deep ecotype).